We begin with the raw amino-acid sequence, 182 residues long: ATP synthase subunit delta (182 aa).

Belongs to the ATPase delta chain family. F-type ATPases have 2 components, F(1) - the catalytic core - and F(0) - the membrane proton channel. F(1) has five subunits: alpha(3), beta(3), gamma(1), delta(1), epsilon(1). CF(0) has four main subunits: a(1), b(1), b'(1) and c(10-14). The alpha and beta chains form an alternating ring which encloses part of the gamma chain. F(1) is attached to F(0) by a central stalk formed by the gamma and epsilon chains, while a peripheral stalk is formed by the delta, b and b' chains.

It is found in the cellular thylakoid membrane. F(1)F(0) ATP synthase produces ATP from ADP in the presence of a proton or sodium gradient. F-type ATPases consist of two structural domains, F(1) containing the extramembraneous catalytic core and F(0) containing the membrane proton channel, linked together by a central stalk and a peripheral stalk. During catalysis, ATP synthesis in the catalytic domain of F(1) is coupled via a rotary mechanism of the central stalk subunits to proton translocation. Its function is as follows. This protein is part of the stalk that links CF(0) to CF(1). It either transmits conformational changes from CF(0) to CF(1) or is implicated in proton conduction. The protein is ATP synthase subunit delta of Synechococcus sp. (strain JA-2-3B'a(2-13)) (Cyanobacteria bacterium Yellowstone B-Prime).